The chain runs to 143 residues: Ribosome-binding factor A (143 aa).

The disordered stretch occupies residues 119-143 (KAKQQQFTPDTPDNSESVDGEKEQD). Positions 122-133 (QQQFTPDTPDNS) are enriched in polar residues.

Belongs to the RbfA family. In terms of assembly, monomer. Binds 30S ribosomal subunits, but not 50S ribosomal subunits or 70S ribosomes.

It is found in the cytoplasm. One of several proteins that assist in the late maturation steps of the functional core of the 30S ribosomal subunit. Associates with free 30S ribosomal subunits (but not with 30S subunits that are part of 70S ribosomes or polysomes). Required for efficient processing of 16S rRNA. May interact with the 5'-terminal helix region of 16S rRNA. This is Ribosome-binding factor A from Shewanella frigidimarina (strain NCIMB 400).